A 309-amino-acid polypeptide reads, in one-letter code: Biotin synthase (309 aa).

Residues 35–259 (NKIQISSLLS…MIPKSYIRLS (225 aa)) form the Radical SAM core domain. [4Fe-4S] cluster is bound by residues Cys50, Cys54, and Cys57. Positions 94, 125, 185, and 257 each coordinate [2Fe-2S] cluster.

Belongs to the radical SAM superfamily. Biotin synthase family. In terms of assembly, homodimer. [4Fe-4S] cluster is required as a cofactor. The cofactor is [2Fe-2S] cluster.

The enzyme catalyses (4R,5S)-dethiobiotin + (sulfur carrier)-SH + 2 reduced [2Fe-2S]-[ferredoxin] + 2 S-adenosyl-L-methionine = (sulfur carrier)-H + biotin + 2 5'-deoxyadenosine + 2 L-methionine + 2 oxidized [2Fe-2S]-[ferredoxin]. It functions in the pathway cofactor biosynthesis; biotin biosynthesis; biotin from 7,8-diaminononanoate: step 2/2. Its function is as follows. Catalyzes the conversion of dethiobiotin (DTB) to biotin by the insertion of a sulfur atom into dethiobiotin via a radical-based mechanism. This Rickettsia felis (strain ATCC VR-1525 / URRWXCal2) (Rickettsia azadi) protein is Biotin synthase.